The primary structure comprises 134 residues: Transcription antitermination protein NusB (134 aa).

Belongs to the NusB family.

In terms of biological role, involved in transcription antitermination. Required for transcription of ribosomal RNA (rRNA) genes. Binds specifically to the boxA antiterminator sequence of the ribosomal RNA (rrn) operons. The polypeptide is Transcription antitermination protein NusB (Shewanella oneidensis (strain ATCC 700550 / JCM 31522 / CIP 106686 / LMG 19005 / NCIMB 14063 / MR-1)).